A 275-amino-acid polypeptide reads, in one-letter code: 4-diphosphocytidyl-2-C-methyl-D-erythritol kinase (275 aa).

The active site involves Lys-14. 98-108 lines the ATP pocket; sequence PMGAGLGGGSS. Asp-140 is an active-site residue.

The protein belongs to the GHMP kinase family. IspE subfamily.

It catalyses the reaction 4-CDP-2-C-methyl-D-erythritol + ATP = 4-CDP-2-C-methyl-D-erythritol 2-phosphate + ADP + H(+). Its pathway is isoprenoid biosynthesis; isopentenyl diphosphate biosynthesis via DXP pathway; isopentenyl diphosphate from 1-deoxy-D-xylulose 5-phosphate: step 3/6. Functionally, catalyzes the phosphorylation of the position 2 hydroxy group of 4-diphosphocytidyl-2C-methyl-D-erythritol. The protein is 4-diphosphocytidyl-2-C-methyl-D-erythritol kinase of Francisella philomiragia subsp. philomiragia (strain ATCC 25017 / CCUG 19701 / FSC 153 / O#319-036).